Here is a 228-residue protein sequence, read N- to C-terminus: DNA mismatch repair protein MutH (228 aa).

This sequence belongs to the MutH family.

The protein localises to the cytoplasm. Functionally, sequence-specific endonuclease that cleaves unmethylated GATC sequences. It is involved in DNA mismatch repair. The sequence is that of DNA mismatch repair protein MutH from Yersinia pseudotuberculosis serotype IB (strain PB1/+).